The sequence spans 811 residues: LPS-assembly protein LptD (811 aa).

Positions Met-1–Ala-17 are cleaved as a signal peptide. The interval Met-1–Arg-22 is disordered.

Belongs to the LptD family. As to quaternary structure, component of the lipopolysaccharide transport and assembly complex. Interacts with LptE and LptA.

The protein localises to the cell outer membrane. Functionally, together with LptE, is involved in the assembly of lipopolysaccharide (LPS) at the surface of the outer membrane. The protein is LPS-assembly protein LptD of Ralstonia nicotianae (strain ATCC BAA-1114 / GMI1000) (Ralstonia solanacearum).